Here is a 252-residue protein sequence, read N- to C-terminus: Coenzyme F420:L-glutamate ligase (252 aa).

Residues 12–15 (VPLE), 44–45 (HT), and K49 contribute to the GTP site. D114 contacts a divalent metal cation. N117 provides a ligand contact to GTP. A divalent metal cation contacts are provided by D155, T156, and Q213. Residue 211–218 (MGQADEGT) coordinates GTP.

The protein belongs to the CofE family. In terms of assembly, homodimer. It depends on Mg(2+) as a cofactor. Mn(2+) is required as a cofactor. Requires K(+) as cofactor.

The catalysed reaction is oxidized coenzyme F420-0 + GTP + L-glutamate = oxidized coenzyme F420-1 + GDP + phosphate + H(+). It catalyses the reaction oxidized coenzyme F420-1 + GTP + L-glutamate = oxidized coenzyme F420-2 + GDP + phosphate + H(+). Its pathway is cofactor biosynthesis; coenzyme F420 biosynthesis. Its function is as follows. Catalyzes the GTP-dependent successive addition of two or more gamma-linked L-glutamates to the L-lactyl phosphodiester of 7,8-didemethyl-8-hydroxy-5-deazariboflavin (F420-0) to form coenzyme F420-0-glutamyl-glutamate (F420-2) or polyglutamated F420 derivatives. This is Coenzyme F420:L-glutamate ligase from Methanopyrus kandleri (strain AV19 / DSM 6324 / JCM 9639 / NBRC 100938).